Consider the following 388-residue polypeptide: Fructose-bisphosphate aldolase, chloroplastic (388 aa).

A chloroplast-targeting transit peptide spans 1–38 (MASATLLKSSFLPKKSEWGATRQAAAPKPVTVSMVVRA). Residue Arg-72 participates in substrate binding. Glu-215 acts as the Proton acceptor in catalysis. The active-site Schiff-base intermediate with dihydroxyacetone-P is Lys-257. Substrate is bound by residues 299–301 (SGG) and Arg-329.

This sequence belongs to the class I fructose-bisphosphate aldolase family. Homotetramer. Expressed in leaf mesophyll cells.

The protein localises to the plastid. The protein resides in the chloroplast. Its subcellular location is the plastoglobule. The enzyme catalyses beta-D-fructose 1,6-bisphosphate = D-glyceraldehyde 3-phosphate + dihydroxyacetone phosphate. It participates in carbohydrate degradation; glycolysis; D-glyceraldehyde 3-phosphate and glycerone phosphate from D-glucose: step 4/4. Its function is as follows. Plays a key role in glycolysis and gluconeogenesis. The chain is Fructose-bisphosphate aldolase, chloroplastic from Oryza sativa subsp. japonica (Rice).